The sequence spans 440 residues: MQVTETLTEGLKRGFTVVVPGSDLSEKREKRLAELSKTMQMPGFRPGKVPLSMVRKRFGDAVAAEVMEASVNEATERMINDRSLRPAVQPKVEVVRAEPDSDLEFTVELEVLPEVTIPDLKAISLTRPKAPVTEAEIDEAIARFAEQRAETEVVTEDRPAATGDILTVDFLGKRDGVPFEGGAGTDTDIELGGSGFIPGFAEQMEGMKAGETKVITVTFPEQYHAAELAGKEATFDITAKALKRRVAPVIDDAFAEANGFENLAEFRKFFADRLEQSRAGASRLKVKRALLDKLAEQADFPAPASLVDAEFAEIWRQVEAEKQAGRLDEEDAGKDEETLRADYRAIAERRVRLGLLVAEIGRTNNVQITEQDMRRAMIAEMQQFPGQEKMIMEFYQKNPRALDRLRGPIFEDKVVDYALELATVTDEEVSAEALFADTDD.

The PPIase FKBP-type domain occupies 163–248 (GDILTVDFLG…AKALKRRVAP (86 aa)).

This sequence belongs to the FKBP-type PPIase family. Tig subfamily.

It is found in the cytoplasm. The enzyme catalyses [protein]-peptidylproline (omega=180) = [protein]-peptidylproline (omega=0). Functionally, involved in protein export. Acts as a chaperone by maintaining the newly synthesized protein in an open conformation. Functions as a peptidyl-prolyl cis-trans isomerase. This Acidiphilium cryptum (strain JF-5) protein is Trigger factor.